The chain runs to 396 residues: DNA replication and repair protein RecF (396 aa).

30–37 (GANGSGKT) is an ATP binding site.

It belongs to the RecF family.

It localises to the cytoplasm. Functionally, the RecF protein is involved in DNA metabolism; it is required for DNA replication and normal SOS inducibility. RecF binds preferentially to single-stranded, linear DNA. It also seems to bind ATP. The protein is DNA replication and repair protein RecF of Thermomicrobium roseum (strain ATCC 27502 / DSM 5159 / P-2).